The chain runs to 619 residues: Elongation factor 4 (619 aa).

Positions 17-198 (SVIRNFCIIA…RVVRAIPGPE (182 aa)) constitute a tr-type G domain. Residues 29 to 34 (DHGKST) and 145 to 148 (NKID) contribute to the GTP site.

The protein belongs to the TRAFAC class translation factor GTPase superfamily. Classic translation factor GTPase family. LepA subfamily.

It is found in the cell membrane. It carries out the reaction GTP + H2O = GDP + phosphate + H(+). Required for accurate and efficient protein synthesis under certain stress conditions. May act as a fidelity factor of the translation reaction, by catalyzing a one-codon backward translocation of tRNAs on improperly translocated ribosomes. Back-translocation proceeds from a post-translocation (POST) complex to a pre-translocation (PRE) complex, thus giving elongation factor G a second chance to translocate the tRNAs correctly. Binds to ribosomes in a GTP-dependent manner. This chain is Elongation factor 4, found in Micrococcus luteus (strain ATCC 4698 / DSM 20030 / JCM 1464 / CCM 169 / CCUG 5858 / IAM 1056 / NBRC 3333 / NCIMB 9278 / NCTC 2665 / VKM Ac-2230) (Micrococcus lysodeikticus).